A 208-amino-acid chain; its full sequence is Redox-sensing transcriptional repressor Rex (208 aa).

A DNA-binding region (H-T-H motif) is located at residues 16-55; it reads LYYRCLSELNEKGEDKVSSAVLERLLKIDAATVRRDFSYF. 90-95 contacts NAD(+); that stretch reads GVGNLG.

Belongs to the transcriptional regulatory Rex family. In terms of assembly, homodimer.

It localises to the cytoplasm. In terms of biological role, modulates transcription in response to changes in cellular NADH/NAD(+) redox state. The sequence is that of Redox-sensing transcriptional repressor Rex from Pediococcus pentosaceus (strain ATCC 25745 / CCUG 21536 / LMG 10740 / 183-1w).